Here is a 457-residue protein sequence, read N- to C-terminus: 3-isopropylmalate dehydratase large subunit (457 aa).

Positions 337, 397, and 400 each coordinate [4Fe-4S] cluster.

The protein belongs to the aconitase/IPM isomerase family. LeuC type 1 subfamily. In terms of assembly, heterodimer of LeuC and LeuD. Requires [4Fe-4S] cluster as cofactor.

The enzyme catalyses (2R,3S)-3-isopropylmalate = (2S)-2-isopropylmalate. It participates in amino-acid biosynthesis; L-leucine biosynthesis; L-leucine from 3-methyl-2-oxobutanoate: step 2/4. In terms of biological role, catalyzes the isomerization between 2-isopropylmalate and 3-isopropylmalate, via the formation of 2-isopropylmaleate. In Oenococcus oeni (strain ATCC BAA-331 / PSU-1), this protein is 3-isopropylmalate dehydratase large subunit.